The primary structure comprises 413 residues: PCI domain-containing protein 2 homolog (413 aa).

A PCI domain is found at 222–403 (VAYNYFLGRK…QKLVISKTNA (182 aa)).

The protein belongs to the CSN12 family.

This is PCI domain-containing protein 2 homolog from Caenorhabditis briggsae.